Here is a 182-residue protein sequence, read N- to C-terminus: ADP-ribosylation factor-like protein 3 (182 aa).

The N-myristoyl glycine moiety is linked to residue G2. Phosphoserine is present on S5. Residues 24–31 (GLDNAGKT), T48, 67–71 (DIGGQ), G70, 126–129 (NKQD), and 159–161 (SAL) each bind GTP. Positions 31 and 48 each coordinate Mg(2+).

Belongs to the small GTPase superfamily. Arf family. As to quaternary structure, found in a complex with ARL3, RP2 and UNC119 (or UNC119B); RP2 induces hydrolysis of GTP ARL3 in the complex, leading to the release of UNC119 (or UNC119B). Interacts with RP2; interaction is direct and stimulated with the activated GTP-bound form of ARL3. Interacts with SYS1. Interacts with ARL2BP; the GTP-bound form interacts with ARL2BP. Microtubule-associated protein. Does not interact with TBCC. Interacts with RP2. Interacts with PDE6D; the interaction occurs specifically with the GTP-bound form of ARL3. Interacts with GGA1; the interaction recruits PKD1:PKD2 complex to trans-Golgi network and is required for ciliary targeting of PKD1:PKD2 complex. Interacts with DNAAF9.

Its subcellular location is the golgi apparatus membrane. The protein resides in the cytoplasm. It localises to the cytoskeleton. The protein localises to the spindle. It is found in the nucleus. Its subcellular location is the microtubule organizing center. The protein resides in the centrosome. It localises to the cell projection. The protein localises to the cilium. Small GTP-binding protein which cycles between an inactive GDP-bound and an active GTP-bound form, and the rate of cycling is regulated by guanine nucleotide exchange factors (GEF) and GTPase-activating proteins (GAP). Required for normal cytokinesis and cilia signaling. Requires assistance from GTPase-activating proteins (GAPs) like RP2 and PDE6D, in order to cycle between inactive GDP-bound and active GTP-bound forms. Required for targeting proteins to the cilium, including myristoylated NPHP3 and prenylated INPP5E. Targets NPHP3 to the ciliary membrane by releasing myristoylated NPHP3 from UNC119B cargo adapter into the cilium. Required for PKD1:PKD2 complex targeting from the trans-Golgi network to the cilium. The chain is ADP-ribosylation factor-like protein 3 (ARL3) from Bos taurus (Bovine).